Reading from the N-terminus, the 193-residue chain is Homeobox protein HD-12 (193 aa).

The homeobox; TALE-type DNA-binding region spans 123–185 (SVIRRINFPK…NARRRILPFM (63 aa)).

It belongs to the TALE/KNOX homeobox family.

It localises to the nucleus. The sequence is that of Homeobox protein HD-12 (HD-12) from Encephalitozoon cuniculi (strain GB-M1) (Microsporidian parasite).